Reading from the N-terminus, the 86-residue chain is Small ribosomal subunit protein bS16 (86 aa).

It belongs to the bacterial ribosomal protein bS16 family.

The polypeptide is Small ribosomal subunit protein bS16 (Thermoanaerobacter sp. (strain X514)).